Consider the following 434-residue polypeptide: Enolase 2 (434 aa).

Gln-171 is a binding site for (2R)-2-phosphoglycerate. The Proton donor role is filled by Glu-213. 3 residues coordinate Mg(2+): Asp-250, Glu-293, and Asp-320. Lys-345, Arg-374, Ser-375, and Lys-396 together coordinate (2R)-2-phosphoglycerate. The active-site Proton acceptor is Lys-345.

This sequence belongs to the enolase family. Mg(2+) serves as cofactor.

The protein resides in the cytoplasm. It is found in the secreted. It localises to the cell surface. It catalyses the reaction (2R)-2-phosphoglycerate = phosphoenolpyruvate + H2O. It participates in carbohydrate degradation; glycolysis; pyruvate from D-glyceraldehyde 3-phosphate: step 4/5. Catalyzes the reversible conversion of 2-phosphoglycerate (2-PG) into phosphoenolpyruvate (PEP). It is essential for the degradation of carbohydrates via glycolysis. This Streptomyces coelicolor (strain ATCC BAA-471 / A3(2) / M145) protein is Enolase 2.